A 352-amino-acid polypeptide reads, in one-letter code: Very-long-chain 3-oxoacyl-CoA reductase (352 aa).

Residues 20 to 40 form a helical membrane-spanning segment; it reads TLWFIFIFGLLKLVPFALRFL. Positions 66, 120, 147, 228, 232, 261, and 263 each coordinate NADP(+). Tyr-228 (proton donor) is an active-site residue. The active-site Lowers pKa of active site Tyr is Lys-232.

This sequence belongs to the short-chain dehydrogenases/reductases (SDR) family.

The protein localises to the endoplasmic reticulum membrane. The catalysed reaction is a very-long-chain (3R)-3-hydroxyacyl-CoA + NADP(+) = a very-long-chain 3-oxoacyl-CoA + NADPH + H(+). Its pathway is lipid metabolism; fatty acid biosynthesis. Functionally, component of the microsomal membrane bound fatty acid elongation system, which produces the 26-carbon very long-chain fatty acids (VLCFA) from palmitate. Catalyzes the reduction of the 3-ketoacyl-CoA intermediate that is formed in each cycle of fatty acid elongation. VLCFAs serve as precursors for ceramide and sphingolipids. The polypeptide is Very-long-chain 3-oxoacyl-CoA reductase (Candida glabrata (strain ATCC 2001 / BCRC 20586 / JCM 3761 / NBRC 0622 / NRRL Y-65 / CBS 138) (Yeast)).